The chain runs to 165 residues: ATP synthase subunit b (165 aa).

Residues 5-27 (INSTTLGNIIITLGSVFLLYYLI) traverse the membrane as a helical segment.

Belongs to the ATPase B chain family. As to quaternary structure, F-type ATPases have 2 components, F(1) - the catalytic core - and F(0) - the membrane proton channel. F(1) has five subunits: alpha(3), beta(3), gamma(1), delta(1), epsilon(1). F(0) has three main subunits: a(1), b(2) and c(10-14). The alpha and beta chains form an alternating ring which encloses part of the gamma chain. F(1) is attached to F(0) by a central stalk formed by the gamma and epsilon chains, while a peripheral stalk is formed by the delta and b chains.

It is found in the cell membrane. In terms of biological role, f(1)F(0) ATP synthase produces ATP from ADP in the presence of a proton or sodium gradient. F-type ATPases consist of two structural domains, F(1) containing the extramembraneous catalytic core and F(0) containing the membrane proton channel, linked together by a central stalk and a peripheral stalk. During catalysis, ATP synthesis in the catalytic domain of F(1) is coupled via a rotary mechanism of the central stalk subunits to proton translocation. Its function is as follows. Component of the F(0) channel, it forms part of the peripheral stalk, linking F(1) to F(0). The sequence is that of ATP synthase subunit b from Streptococcus thermophilus (strain CNRZ 1066).